The sequence spans 444 residues: Protein phosphatase 2C homolog C10F6.17c (444 aa).

In terms of domain architecture, PPM-type phosphatase spans 85-439 (RYDFNQVASN…DDITVTVIFF (355 aa)). Mn(2+) is bound by residues Asp-121, Gly-122, and Asp-344.

The protein belongs to the PP2C family. Mg(2+) is required as a cofactor. Mn(2+) serves as cofactor.

It localises to the mitochondrion. The catalysed reaction is O-phospho-L-seryl-[protein] + H2O = L-seryl-[protein] + phosphate. The enzyme catalyses O-phospho-L-threonyl-[protein] + H2O = L-threonyl-[protein] + phosphate. Its function is as follows. Involved in regulation of pyruvate dehydrogenase activity. The sequence is that of Protein phosphatase 2C homolog C10F6.17c from Schizosaccharomyces pombe (strain 972 / ATCC 24843) (Fission yeast).